Consider the following 338-residue polypeptide: 1-aminocyclopropane-1-carboxylate deaminase (338 aa).

At Lys51 the chain carries N6-(pyridoxal phosphate)lysine. Residue Ser78 is the Nucleophile of the active site.

The protein belongs to the ACC deaminase/D-cysteine desulfhydrase family. Homotrimer. Pyridoxal 5'-phosphate is required as a cofactor.

It carries out the reaction 1-aminocyclopropane-1-carboxylate + H2O = 2-oxobutanoate + NH4(+). Functionally, catalyzes a cyclopropane ring-opening reaction, the irreversible conversion of 1-aminocyclopropane-1-carboxylate (ACC) to ammonia and alpha-ketobutyrate. Allows growth on ACC as a nitrogen source. The polypeptide is 1-aminocyclopropane-1-carboxylate deaminase (Paraburkholderia xenovorans (strain LB400)).